The primary structure comprises 553 residues: Cytokine-like nuclear factor N-PAC (553 aa).

Residues 8–66 (LGDLVWGKLGRYPPWPGKIVNPPKDLKKPRGKKCFFVKFFGTEDHAWIKVEQLKPYHAH) enclose the PWWP domain. Basic and acidic residues-rich tracts occupy residues 92-145 (RAKG…EGKK) and 162-182 (RAQEQSPRKRGRPPKDEKDLT). A disordered region spans residues 92–188 (RAKGKDQTSS…KDLTIPESST (97 aa)). A Phosphoserine modification is found at serine 130. Lysine 135 is covalently cross-linked (Glycyl lysine isopeptide (Lys-Gly) (interchain with G-Cter in SUMO2)). Serine 167 is modified (phosphoserine). Positions 168-180 (PRKRGRPPKDEKD) form a DNA-binding region, a.T hook. Glycyl lysine isopeptide (Lys-Gly) (interchain with G-Cter in SUMO2) cross-links involve residues lysine 176, lysine 179, lysine 201, and lysine 211. The tract at residues 214–217 (DPHF) is interaction with histone H3. The interaction with KDM1B stretch occupies residues 216–225 (HFHHFLLSQT). Glycyl lysine isopeptide (Lys-Gly) (interchain with G-Cter in SUMO2) cross-links involve residues lysine 227, lysine 237, lysine 240, and lysine 269. A dehydrogenase domain region spans residues 261–553 (GSITPTDKKI…MSAVYRAYIH (293 aa)). Position 271-285 (271-285 (GFLGLGLMGSGIVSN)) interacts with NAD(+). Residue lysine 302 forms a Glycyl lysine isopeptide (Lys-Gly) (interchain with G-Cter in SUMO2) linkage. NAD(+)-binding residues include threonine 362 and lysine 505. Serine 540 is subject to Phosphoserine.

Belongs to the HIBADH-related family. NP60 subfamily. As to quaternary structure, homotetramere. Interacts with MAPK14. Interacts with KDM1B at nucleosomes; this interaction stimulates H3K4me1 and H3K4me2 demethylation. Binds to mononucleosomes. Interacts with GATA4; the interaction is required for a synergistic activation of GATA4 target genes transcription.

The protein resides in the nucleus. The protein localises to the chromosome. Functionally, cytokine-like nuclear factor with chromatin gene reader activity involved in chromatin modification and regulation of gene expression. Acts as a nucleosome-destabilizing factor that is recruited to genes during transcriptional activation. Recognizes and binds histone H3 without a preference for specific epigenetic markers and also binds DNA. Interacts with KDM1B and promotes its histone demethylase activity by facilitating the capture of H3 tails, they form a multifunctional enzyme complex that modifies transcribed chromatin and facilitates Pol II transcription through nucleosomes. Stimulates the acetylation of 'Lys-56' of nucleosomal histone H3 (H3K56ac) by EP300. With GATA4, co-binds a defined set of heart development genes and coregulates their expression during cardiomyocyte differentiation. Regulates p38 MAP kinase activity by mediating stress activation of MAPK14/p38alpha and specifically regulating MAPK14 signaling. Indirectly promotes phosphorylation of MAPK14 and activation of ATF2. The phosphorylation of MAPK14 requires upstream activity of MAP2K4 and MAP2K6. The sequence is that of Cytokine-like nuclear factor N-PAC (GLYR1) from Pongo abelii (Sumatran orangutan).